Here is a 157-residue protein sequence, read N- to C-terminus: ATP synthase subunit b' (157 aa).

The helical transmembrane segment at 22 to 42 threads the bilayer; it reads ATLPIIAVQFLLLVAVLNSLF.

Belongs to the ATPase B chain family. F-type ATPases have 2 components, F(1) - the catalytic core - and F(0) - the membrane proton channel. F(1) has five subunits: alpha(3), beta(3), gamma(1), delta(1), epsilon(1). F(0) has four main subunits: a(1), b(1), b'(1) and c(10-14). The alpha and beta chains form an alternating ring which encloses part of the gamma chain. F(1) is attached to F(0) by a central stalk formed by the gamma and epsilon chains, while a peripheral stalk is formed by the delta, b and b' chains.

Its subcellular location is the cellular thylakoid membrane. Functionally, f(1)F(0) ATP synthase produces ATP from ADP in the presence of a proton or sodium gradient. F-type ATPases consist of two structural domains, F(1) containing the extramembraneous catalytic core and F(0) containing the membrane proton channel, linked together by a central stalk and a peripheral stalk. During catalysis, ATP synthesis in the catalytic domain of F(1) is coupled via a rotary mechanism of the central stalk subunits to proton translocation. In terms of biological role, component of the F(0) channel, it forms part of the peripheral stalk, linking F(1) to F(0). The b'-subunit is a diverged and duplicated form of b found in plants and photosynthetic bacteria. The chain is ATP synthase subunit b' from Synechococcus sp. (strain JA-3-3Ab) (Cyanobacteria bacterium Yellowstone A-Prime).